Consider the following 152-residue polypeptide: Endoribonuclease YbeY (152 aa).

3 residues coordinate Zn(2+): histidine 112, histidine 116, and histidine 122.

Belongs to the endoribonuclease YbeY family. Requires Zn(2+) as cofactor.

It is found in the cytoplasm. In terms of biological role, single strand-specific metallo-endoribonuclease involved in late-stage 70S ribosome quality control and in maturation of the 3' terminus of the 16S rRNA. The chain is Endoribonuclease YbeY from Pseudoalteromonas translucida (strain TAC 125).